The chain runs to 289 residues: MTAGAPSKFSLYLQLIRWNRPAGWLLLLWPTLSALWLASHGFPGWHLVTVFTLGTFLMRSAGCCINDVADRDFDRHVKRTAQRPVTSGAVSVREALGLGAVLALLAFGLVLTTNAVTIAWSFAALAVTLAYPFAKRYVSMPQAVLGVAFSCGILMAFAAVQSRVPPLAWALLLGNLFWVIAYDTEYAMVDRDDDLKIGMKTSAITLGRFDVAGVMLSYLIFISIWAFALIQRAQSAIFMIAIALALAQALWHGWLIRKRERDDCFKAFRLNHWLGFTVFAGVALSYWGR.

9 helical membrane passes run 22 to 42, 45 to 65, 96 to 116, 118 to 138, 140 to 160, 164 to 184, 211 to 231, 236 to 256, and 267 to 287; these read AGWL…SHGF, WHLV…GCCI, LGLG…TNAV, IAWS…KRYV, MPQA…FAAV, VPPL…AYDT, VAGV…ALIQ, AIFM…GWLI, and AFRL…LSYW.

This sequence belongs to the UbiA prenyltransferase family. Mg(2+) serves as cofactor.

The protein localises to the cell inner membrane. It catalyses the reaction all-trans-octaprenyl diphosphate + 4-hydroxybenzoate = 4-hydroxy-3-(all-trans-octaprenyl)benzoate + diphosphate. The protein operates within cofactor biosynthesis; ubiquinone biosynthesis. Its function is as follows. Catalyzes the prenylation of para-hydroxybenzoate (PHB) with an all-trans polyprenyl group. Mediates the second step in the final reaction sequence of ubiquinone-8 (UQ-8) biosynthesis, which is the condensation of the polyisoprenoid side chain with PHB, generating the first membrane-bound Q intermediate 3-octaprenyl-4-hydroxybenzoate. This is 4-hydroxybenzoate octaprenyltransferase from Polaromonas naphthalenivorans (strain CJ2).